Consider the following 407-residue polypeptide: UDP-N-acetylglucosamine--N-acetylmuramyl-(pentapeptide) pyrophosphoryl-undecaprenol N-acetylglucosamine transferase (407 aa).

Positions 1 to 21 are disordered; it reads MNNSVREPTRGRRGSPPVADA. Residues 38 to 40, Asn-157, Ser-228, and Gln-324 contribute to the UDP-N-acetyl-alpha-D-glucosamine site; that span reads TAG.

This sequence belongs to the glycosyltransferase 28 family. MurG subfamily.

The protein resides in the cell membrane. The enzyme catalyses di-trans,octa-cis-undecaprenyl diphospho-N-acetyl-alpha-D-muramoyl-L-alanyl-D-glutamyl-meso-2,6-diaminopimeloyl-D-alanyl-D-alanine + UDP-N-acetyl-alpha-D-glucosamine = di-trans,octa-cis-undecaprenyl diphospho-[N-acetyl-alpha-D-glucosaminyl-(1-&gt;4)]-N-acetyl-alpha-D-muramoyl-L-alanyl-D-glutamyl-meso-2,6-diaminopimeloyl-D-alanyl-D-alanine + UDP + H(+). The protein operates within cell wall biogenesis; peptidoglycan biosynthesis. Cell wall formation. Catalyzes the transfer of a GlcNAc subunit on undecaprenyl-pyrophosphoryl-MurNAc-pentapeptide (lipid intermediate I) to form undecaprenyl-pyrophosphoryl-MurNAc-(pentapeptide)GlcNAc (lipid intermediate II). This chain is UDP-N-acetylglucosamine--N-acetylmuramyl-(pentapeptide) pyrophosphoryl-undecaprenol N-acetylglucosamine transferase, found in Mycobacterium leprae (strain TN).